The chain runs to 787 residues: Protein translocase subunit SecA 2 (787 aa).

ATP is bound by residues glutamine 86, 104–108 (GEGKT), and aspartate 493.

The protein belongs to the SecA family. As to quaternary structure, monomer and homodimer. Part of the essential Sec protein translocation apparatus which comprises SecA, SecYEG and auxiliary proteins SecDF. Other proteins may also be involved.

The protein resides in the cell membrane. It localises to the cytoplasm. It catalyses the reaction ATP + H2O + cellular proteinSide 1 = ADP + phosphate + cellular proteinSide 2.. Part of the Sec protein translocase complex. Interacts with the SecYEG preprotein conducting channel. Has a central role in coupling the hydrolysis of ATP to the transfer of proteins into and across the cell membrane, serving as an ATP-driven molecular motor driving the stepwise translocation of polypeptide chains across the membrane. The sequence is that of Protein translocase subunit SecA 2 from Bacillus thuringiensis subsp. konkukian (strain 97-27).